The chain runs to 233 residues: Small ribosomal subunit protein uS2c (233 aa).

Belongs to the universal ribosomal protein uS2 family.

It localises to the plastid. Its subcellular location is the chloroplast. This is Small ribosomal subunit protein uS2c (rps2) from Galdieria sulphuraria (Red alga).